Here is a 69-residue protein sequence, read N- to C-terminus: Toxin Lc b (69 aa).

Intrachain disulfides connect Cys-3–Cys-20, Cys-13–Cys-41, Cys-45–Cys-56, and Cys-57–Cys-62.

The protein belongs to the three-finger toxin family. Long-chain subfamily. Type II alpha-neurotoxin sub-subfamily. In terms of tissue distribution, expressed by the venom gland.

It is found in the secreted. Functionally, binds with high affinity to muscular nicotinic acetylcholine receptors (nAChRs), whereas it binds with a low affinity to neuronal alpha-7/CHRNA7 nAChRs. The polypeptide is Toxin Lc b (Laticauda colubrina (Yellow-lipped sea krait)).